Reading from the N-terminus, the 201-residue chain is LexA repressor 1 (201 aa).

Residues 27–47 constitute a DNA-binding region (H-T-H motif); it reads LAEIAQAFGFASRNAAQKHVQ. Active-site for autocatalytic cleavage activity residues include Ser122 and Lys159.

Belongs to the peptidase S24 family. Homodimer.

The enzyme catalyses Hydrolysis of Ala-|-Gly bond in repressor LexA.. Its function is as follows. Represses a number of genes involved in the response to DNA damage (SOS response), including recA and lexA. In the presence of single-stranded DNA, RecA interacts with LexA causing an autocatalytic cleavage which disrupts the DNA-binding part of LexA, leading to derepression of the SOS regulon and eventually DNA repair. The protein is LexA repressor 1 of Xanthomonas axonopodis pv. citri (strain 306).